The primary structure comprises 126 residues: Integrin alpha-M (126 aa).

Residues asparagine 25, asparagine 78, and asparagine 106 are each glycosylated (N-linked (GlcNAc...) asparagine).

The protein belongs to the integrin alpha chain family. In terms of assembly, heterodimer of an alpha and a beta chain. ITGAM associates with ITGB2. Found in a complex with CD177 and ITGB2/CD18. Interacts with JAM3. Interacts with THBD. Interacts with TMEM268; this interaction inhibits ITGAM degradation via the endosome-lysosome pathway.

The protein resides in the cell membrane. It localises to the membrane raft. Its function is as follows. Integrin ITGAM/ITGB2 is implicated in various adhesive interactions of monocytes, macrophages and granulocytes as well as in mediating the uptake of complement-coated particles. It is identical with CR-3, the receptor for the iC3b fragment of the third complement component. It probably recognizes the R-G-D peptide in C3b. Integrin ITGAM/ITGB2 is also a receptor for fibrinogen, factor X and ICAM1. It recognizes P1 and P2 peptides of fibrinogen gamma chain. Regulates neutrophil migration. In association with beta subunit ITGB2/CD18, required for CD177-PRTN3-mediated activation of TNF primed neutrophils. May regulate phagocytosis-induced apoptosis in extravasated neutrophils. May play a role in mast cell development. Required with TYROBP/DAP12 in microglia to control production of microglial superoxide ions which promote the neuronal apoptosis that occurs during brain development. In Cavia porcellus (Guinea pig), this protein is Integrin alpha-M (ITGAM).